The chain runs to 295 residues: Acetylglutamate kinase (295 aa).

Substrate-binding positions include 66–67, Arg-88, and Asn-193; that span reads GG.

It belongs to the acetylglutamate kinase family. ArgB subfamily.

The protein resides in the cytoplasm. It carries out the reaction N-acetyl-L-glutamate + ATP = N-acetyl-L-glutamyl 5-phosphate + ADP. The protein operates within amino-acid biosynthesis; L-arginine biosynthesis; N(2)-acetyl-L-ornithine from L-glutamate: step 2/4. Catalyzes the ATP-dependent phosphorylation of N-acetyl-L-glutamate. The polypeptide is Acetylglutamate kinase (Allorhizobium ampelinum (strain ATCC BAA-846 / DSM 112012 / S4) (Agrobacterium vitis (strain S4))).